The primary structure comprises 199 residues: MESTSSPELLQMARWLAGDFSNQEQAWENPPFFASIRVAYRPLPTAVLGGIGFYVEQAYSGHLEEPYRQAVVELTQVGDGIVIRNYRPLQPQRWRGCARGRAEQLSQLSAADLAYLPGCDVQVKRQGSLFVGVTEPGCRCCVVRNGQTTYLQTTLHLSENEFCSHDRGMDPVTHRQVWGAVAGPFRFRKVVDWQAELLQ.

Belongs to the CpcT/CpeT biliprotein lyase family.

Functionally, covalently attaches a chromophore to Cys residue(s) of phycobiliproteins. The protein is Chromophore lyase CpcT/CpeT 2 of Synechococcus sp. (strain JA-3-3Ab) (Cyanobacteria bacterium Yellowstone A-Prime).